Consider the following 92-residue polypeptide: Small ribosomal subunit protein uS19 (92 aa).

The protein belongs to the universal ribosomal protein uS19 family.

Protein S19 forms a complex with S13 that binds strongly to the 16S ribosomal RNA. This is Small ribosomal subunit protein uS19 from Rickettsia akari (strain Hartford).